The primary structure comprises 419 residues: Cyclin-B2-2 (419 aa).

The tract at residues 79–116 is disordered; sequence QPSSAPLAPIGSERQKRTADSAFHGPADMECTKITSDD.

Belongs to the cyclin family. Cyclin AB subfamily. In terms of assembly, interacts with CDKB2-1. As to expression, expressed in the intercalary meristem and the elongation zone of internodes. Expressed in adventitious roots at all nodes under submergence conditions.

It is found in the nucleus. Involved in the control of the cell cycle at the G2/M (mitosis) transition. May associate to CDKB2-1 and activate CDKB2-1 kinase to promote cell division. In Oryza sativa subsp. indica (Rice), this protein is Cyclin-B2-2 (CYCB2-2).